The primary structure comprises 329 residues: Basic leucine zipper 61 (329 aa).

2 disordered regions span residues 1–22 (MAQL…FSSQ) and 98–204 (DDVH…HDPK). Residues 10 to 22 (TMTTPNWPDFSSQ) show a composition bias toward polar residues. A compositionally biased stretch (low complexity) spans 119–133 (PTRSSSNTSTPSDHN). A compositionally biased stretch (basic and acidic residues) spans 139 to 154 (DNNKEAPPSDHDHHMD). Residues 155–169 (NNVANQNNAAGNNYN) show a composition bias toward low complexity. In terms of domain architecture, bZIP spans 202–254 (DPKRVKRILANRQSAQRSRVRKLQYISELERSVTSLQTEVSVLSPRVAFLDHQ). The segment at 204 to 223 (KRVKRILANRQSAQRSRVRK) is basic motif. Residues 230–251 (LERSVTSLQTEVSVLSPRVAFL) are leucine-zipper. Over residues 304–313 (KMENNVSDQS) the composition is skewed to polar residues. The tract at residues 304 to 329 (KMENNVSDQSPADIKPSVEKEQLLNV) is disordered. Residues 319-329 (PSVEKEQLLNV) are compositionally biased toward basic and acidic residues.

In terms of assembly, forms heterodimers with BZIP18, BZIP43 and VIP1/BZIP51.

The protein resides in the nucleus. Functionally, transcriptional activator. The protein is Basic leucine zipper 61 of Arabidopsis thaliana (Mouse-ear cress).